A 504-amino-acid polypeptide reads, in one-letter code: Histidine--tRNA ligase (504 aa).

This sequence belongs to the class-II aminoacyl-tRNA synthetase family. Homodimer.

The protein resides in the cytoplasm. The enzyme catalyses tRNA(His) + L-histidine + ATP = L-histidyl-tRNA(His) + AMP + diphosphate + H(+). The sequence is that of Histidine--tRNA ligase from Rhizobium rhizogenes (strain K84 / ATCC BAA-868) (Agrobacterium radiobacter).